The sequence spans 657 residues: L-glutamate oxidase precursor (657 aa).

Positions 1–12 (MTETPRDNSATR) are cleaved as a signal peptide. 9 residues coordinate FAD: glutamate 86, alanine 87, arginine 95, methionine 120, arginine 121, methionine 350, glutamate 639, tryptophan 647, and isoleucine 648.

The protein belongs to the flavin monoamine oxidase family. LGOX subfamily. As to quaternary structure, the mature enzyme is a heterohexamer composed of 2 alpha chains, 2 beta chains and 2 gamma chains (alpha2beta2gamma2). Requires FAD as cofactor. Post-translationally, the precursor form is proteolytically cleaved by an endopeptidase into alpha, beta and gamma chains, which form the stable mature enzyme.

The protein localises to the secreted. It catalyses the reaction L-glutamate + O2 + H2O = H2O2 + 2-oxoglutarate + NH4(+). Proteinase K-treated enzyme exhibits improved affinity for the substrate, increased activity and increased thermostability. Catalyzes the oxidative deamination of L-glutamate to 2-ketoglutarate along with the production of ammonia and hydrogen peroxide. Exhibits strict specificity for L-glutamate, and shows only very weak activity with L-glutamine. The protein is L-glutamate oxidase precursor of Streptomyces diastatochromogenes.